A 182-amino-acid chain; its full sequence is Peptidyl-tRNA hydrolase (182 aa).

Y14 contributes to the tRNA binding site. H19 (proton acceptor) is an active-site residue. F64, N66, and N112 together coordinate tRNA.

It belongs to the PTH family. In terms of assembly, monomer.

It localises to the cytoplasm. It catalyses the reaction an N-acyl-L-alpha-aminoacyl-tRNA + H2O = an N-acyl-L-amino acid + a tRNA + H(+). Its function is as follows. Hydrolyzes ribosome-free peptidyl-tRNAs (with 1 or more amino acids incorporated), which drop off the ribosome during protein synthesis, or as a result of ribosome stalling. Catalyzes the release of premature peptidyl moieties from peptidyl-tRNA molecules trapped in stalled 50S ribosomal subunits, and thus maintains levels of free tRNAs and 50S ribosomes. The protein is Peptidyl-tRNA hydrolase of Wolbachia pipientis wMel.